We begin with the raw amino-acid sequence, 166 residues long: UPF0561 protein C2orf68 homolog (166 aa).

The span at 32–49 shows a compositional bias: basic and acidic residues; the sequence is NQLDRDDYDKKVKQAAKE. The disordered stretch occupies residues 32–107; it reads NQLDRDDYDK…SELEPPGRQL (76 aa). Low complexity predominate over residues 91 to 101; that stretch reads ESSSSGSSELE.

Belongs to the UPF0561 family.

The sequence is that of UPF0561 protein C2orf68 homolog from Mus musculus (Mouse).